We begin with the raw amino-acid sequence, 284 residues long: Acetylglutamate kinase (284 aa).

Substrate contacts are provided by residues 64–65 (GG), Arg-86, and Asn-177.

Belongs to the acetylglutamate kinase family. ArgB subfamily.

The protein resides in the cytoplasm. It catalyses the reaction N-acetyl-L-glutamate + ATP = N-acetyl-L-glutamyl 5-phosphate + ADP. Its pathway is amino-acid biosynthesis; L-arginine biosynthesis; N(2)-acetyl-L-ornithine from L-glutamate: step 2/4. In terms of biological role, catalyzes the ATP-dependent phosphorylation of N-acetyl-L-glutamate. In Haemophilus ducreyi (strain 35000HP / ATCC 700724), this protein is Acetylglutamate kinase.